Consider the following 354-residue polypeptide: Rhodopsin (354 aa).

The Extracellular segment spans residues 1–36; it reads MNGTEGPNFYVPMSNKTGIVRSPFEYPQYYLAEPWK. Residues asparagine 2 and asparagine 15 are each glycosylated (N-linked (GlcNAc...) asparagine). Residues 37 to 61 form a helical membrane-spanning segment; sequence YSVLAAYMFLLILLGLPINFMTLYV. At 62–73 the chain is on the cytoplasmic side; that stretch reads TIQHKKLRTPLN. Residues 74-96 form a helical membrane-spanning segment; the sequence is YILLNLAFANHFMVLCGFTITMY. The Extracellular segment spans residues 97 to 110; it reads TSLHGYFVFGQTGC. An intrachain disulfide couples cysteine 110 to cysteine 187. A helical transmembrane segment spans residues 111–133; the sequence is YFEGFFATLGGEIALWSLVVLAI. Residues 134–136 carry the 'Ionic lock' involved in activated form stabilization motif; that stretch reads ERY. Residues 134 to 152 lie on the Cytoplasmic side of the membrane; that stretch reads ERYIVVCKPMSNFRFGENH. Residues 153–173 traverse the membrane as a helical segment; that stretch reads AMMGVAFTWIMALACAVPPLF. Over 174 to 202 the chain is Extracellular; it reads GWSRYIPEGMQCSCGVDYYTLKPEVNNES. A helical transmembrane segment spans residues 203–224; sequence FVIYMFVVHFLIPLIIISFCYG. Over 225-252 the chain is Cytoplasmic; the sequence is RLVCTVKEAAAQQQESATTQKAEKEVTR. A helical membrane pass occupies residues 253-274; sequence MVVIMVIFFLICWVPYAYVAFY. Residues 275–286 are Extracellular-facing; it reads IFTHQGSEFGPI. Residues 287 to 308 traverse the membrane as a helical segment; it reads FMTVPAFFAKSSAIYNPVIYIM. At lysine 296 the chain carries N6-(retinylidene)lysine. The Cytoplasmic portion of the chain corresponds to 309–354; sequence LNKQFRNCMITTLCCGKNPFGDEDASSAATSKTEATSVSTSQVSPA. S-palmitoyl cysteine attachment occurs at residues cysteine 322 and cysteine 323. A disordered region spans residues 331–354; it reads EDASSAATSKTEATSVSTSQVSPA. Positions 334-354 are enriched in low complexity; sequence SSAATSKTEATSVSTSQVSPA.

Belongs to the G-protein coupled receptor 1 family. Opsin subfamily. Contains one covalently linked retinal chromophore. Upon light absorption, the covalently bound 11-cis-retinal is converted to all-trans-retinal. After hydrolysis of the Schiff base and release of the covalently bound all-trans-retinal, active rhodopsin is regenerated by binding of a fresh molecule of 11-cis-retinal. As to expression, retina. Localized in the ventral part of the retina.

The protein resides in the membrane. It is found in the cell projection. Its subcellular location is the cilium. It localises to the photoreceptor outer segment. In terms of biological role, photoreceptor required for image-forming vision at low light intensity. Required for photoreceptor cell viability after birth. May use a mixture of retinal and 3-dehydroretinal as visual pigment. Light-induced isomerization of 11-cis to all-trans retinal triggers a conformational change that activates signaling via G-proteins. Subsequent receptor phosphorylation mediates displacement of the bound G-protein alpha subunit by arrestin and terminates signaling. The chain is Rhodopsin (RHO) from Aquarana catesbeiana (American bullfrog).